The chain runs to 314 residues: Serine/threonine-protein phosphatase SIT4 (314 aa).

Residues aspartate 53, histidine 55, aspartate 85, and asparagine 117 each coordinate Mn(2+). Histidine 118 serves as the catalytic Proton donor. Residues histidine 167 and histidine 241 each contribute to the Mn(2+) site.

The protein belongs to the PPP phosphatase family. PP-6 (PP-V) subfamily. In terms of assembly, interacts with MDS3. It depends on Mn(2+) as a cofactor.

The protein localises to the cytoplasm. It catalyses the reaction O-phospho-L-seryl-[protein] + H2O = L-seryl-[protein] + phosphate. The enzyme catalyses O-phospho-L-threonyl-[protein] + H2O = L-threonyl-[protein] + phosphate. Serine/threonine protein phosphatase which is involved in the dephosphorylation of the large subunit of RNA polymerase II. Is required in late G1 for normal G1 cyclin expression, bud initiation and expression of certain genes that are periodically expressed during late G1. Plays a role during hyphal growth through the regulation of cell wall biogenesis, osmosensing and protein translation. Involved in virulence in a mouse systemic infection model. The chain is Serine/threonine-protein phosphatase SIT4 (SIT4) from Candida albicans (strain SC5314 / ATCC MYA-2876) (Yeast).